A 274-amino-acid polypeptide reads, in one-letter code: Cytochrome b-c1 complex subunit Rieske, mitochondrial (274 aa).

Topologically, residues serine 79 to serine 103 are mitochondrial matrix. A helical membrane pass occupies residues arginine 104 to methionine 140. Residues serine 141–glycine 274 lie on the Mitochondrial intermembrane side of the membrane. Residues glutamate 187–valine 272 enclose the Rieske domain. Residues cysteine 217, histidine 219, cysteine 236, histidine 239, and serine 241 each contribute to the [2Fe-2S] cluster site. A disulfide bridge links cysteine 222 with cysteine 238.

The protein belongs to the Rieske iron-sulfur protein family. Component of the ubiquinol-cytochrome c oxidoreductase (cytochrome b-c1 complex, complex III, CIII), a multisubunit enzyme composed of 11 subunits. The complex is composed of 3 respiratory subunits cytochrome b, cytochrome c1 and Rieske protein UQCRFS1, 2 core protein subunits UQCRC1/QCR1 and UQCRC2/QCR2, and 6 low-molecular weight protein subunits UQCRH/QCR6, UQCRB/QCR7, UQCRQ/QCR8, UQCR10/QCR9, UQCR11/QCR10 and subunit 9, the cleavage product of Rieske protein UQCRFS1. The complex exists as an obligatory dimer and forms supercomplexes (SCs) in the inner mitochondrial membrane with NADH-ubiquinone oxidoreductase (complex I, CI) and cytochrome c oxidase (complex IV, CIV), resulting in different assemblies (supercomplex SCI(1)III(2)IV(1) and megacomplex MCI(2)III(2)IV(2)). Incorporation of the Rieske protein UQCRFS1 is the penultimate step in complex III assembly. Interacts with TTC19, which is involved in the clearance of UQCRFS1 fragments. In terms of assembly, component of the ubiquinol-cytochrome c oxidoreductase (cytochrome b-c1 complex, complex III, CIII). Subunit 9 corresponds to the mitochondrial targeting sequence (MTS) of Rieske protein UQCRFS1. It is retained after processing and incorporated inside complex III, where it remains bound to the complex and localizes between the 2 core subunits UQCRC1/QCR1 and UQCRC2/QCR2. [2Fe-2S] cluster is required as a cofactor. Post-translationally, proteolytic processing is necessary for the correct insertion of UQCRFS1 in the complex III dimer. Several fragments are generated during UQCRFS1 insertion, most probably due to the endogenous matrix-processing peptidase (MPP) activity of the 2 core protein subunits UQCRC1/QCR1 and UQCRC2/QCR2, which are homologous to the 2 mitochondrial-processing peptidase (MPP) subunits beta-MPP and alpha-MPP respectively. The action of the protease is also necessary for the clearance of the UQCRFS1 fragments.

Its subcellular location is the mitochondrion inner membrane. It catalyses the reaction a quinol + 2 Fe(III)-[cytochrome c](out) = a quinone + 2 Fe(II)-[cytochrome c](out) + 2 H(+)(out). Functionally, component of the ubiquinol-cytochrome c oxidoreductase, a multisubunit transmembrane complex that is part of the mitochondrial electron transport chain which drives oxidative phosphorylation. The respiratory chain contains 3 multisubunit complexes succinate dehydrogenase (complex II, CII), ubiquinol-cytochrome c oxidoreductase (cytochrome b-c1 complex, complex III, CIII) and cytochrome c oxidase (complex IV, CIV), that cooperate to transfer electrons derived from NADH and succinate to molecular oxygen, creating an electrochemical gradient over the inner membrane that drives transmembrane transport and the ATP synthase. The cytochrome b-c1 complex catalyzes electron transfer from ubiquinol to cytochrome c, linking this redox reaction to translocation of protons across the mitochondrial inner membrane, with protons being carried across the membrane as hydrogens on the quinol. In the process called Q cycle, 2 protons are consumed from the matrix, 4 protons are released into the intermembrane space and 2 electrons are passed to cytochrome c. The Rieske protein is a catalytic core subunit containing a [2Fe-2S] iron-sulfur cluster. It cycles between 2 conformational states during catalysis to transfer electrons from the quinol bound in the Q(0) site in cytochrome b to cytochrome c1. Incorporation of UQCRFS1 is the penultimate step in complex III assembly. Component of the ubiquinol-cytochrome c oxidoreductase (cytochrome b-c1 complex, complex III, CIII). UQCRFS1 undergoes proteolytic processing once it is incorporated in the complex III dimer. One of the fragments, called subunit 9, corresponds to its mitochondrial targeting sequence (MTS). The proteolytic processing is necessary for the correct insertion of UQCRFS1 in the complex III dimer, but the persistence of UQCRFS1-derived fragments may prevent newly imported UQCRFS1 to be processed and assembled into complex III and is detrimental for the complex III structure and function. In Colobus polykomos (Western black-and-white colobus monkey), this protein is Cytochrome b-c1 complex subunit Rieske, mitochondrial (UQCRFS1).